Reading from the N-terminus, the 96-residue chain is Protein RSI-1 (96 aa).

The signal sequence occupies residues 1 to 29 (MAKSGYNASFLLLISMFLILLTFSNVVEG).

This sequence belongs to the GASA family. Post-translationally, six disulfide bonds may be present. Expressed very early in lateral root development.

The protein resides in the secreted. The polypeptide is Protein RSI-1 (RSI-1) (Solanum lycopersicum (Tomato)).